The primary structure comprises 264 residues: Thymidylate synthase (264 aa).

Arg21 lines the dUMP pocket. His51 contacts (6R)-5,10-methylene-5,6,7,8-tetrahydrofolate. Residue 126–127 (RR) coordinates dUMP. Cys146 serves as the catalytic Nucleophile. DUMP contacts are provided by residues 166-169 (RSAD), Asn177, and 207-209 (HLY). Position 169 (Asp169) interacts with (6R)-5,10-methylene-5,6,7,8-tetrahydrofolate. Ala263 lines the (6R)-5,10-methylene-5,6,7,8-tetrahydrofolate pocket.

This sequence belongs to the thymidylate synthase family. Bacterial-type ThyA subfamily. As to quaternary structure, homodimer.

The protein localises to the cytoplasm. The enzyme catalyses dUMP + (6R)-5,10-methylene-5,6,7,8-tetrahydrofolate = 7,8-dihydrofolate + dTMP. The protein operates within pyrimidine metabolism; dTTP biosynthesis. Catalyzes the reductive methylation of 2'-deoxyuridine-5'-monophosphate (dUMP) to 2'-deoxythymidine-5'-monophosphate (dTMP) while utilizing 5,10-methylenetetrahydrofolate (mTHF) as the methyl donor and reductant in the reaction, yielding dihydrofolate (DHF) as a by-product. This enzymatic reaction provides an intracellular de novo source of dTMP, an essential precursor for DNA biosynthesis. The sequence is that of Thymidylate synthase from Alkalilimnicola ehrlichii (strain ATCC BAA-1101 / DSM 17681 / MLHE-1).